Reading from the N-terminus, the 148-residue chain is uncharacterized protein (148 aa).

The protein resides in the plastid. Its subcellular location is the chloroplast. This is an uncharacterized protein from Porphyra purpurea (Red seaweed).